We begin with the raw amino-acid sequence, 47 residues long: Conotoxin Cal6.18 (47 aa).

A signal peptide spans 1–19 (MKLTYVLIVAMLVLVVCRA).

Belongs to the conotoxin O1 superfamily. Post-translationally, may contain 3 disulfide bonds. As to expression, expressed by the venom duct.

It is found in the secreted. Functionally, probable neurotoxin. The sequence is that of Conotoxin Cal6.18 from Californiconus californicus (California cone).